The following is a 354-amino-acid chain: Uroporphyrinogen decarboxylase (354 aa).

Substrate is bound by residues 25 to 29, Asp-75, Tyr-152, Thr-207, and His-330; that span reads RQAGR.

The protein belongs to the uroporphyrinogen decarboxylase family. In terms of assembly, homodimer.

It is found in the cytoplasm. It catalyses the reaction uroporphyrinogen III + 4 H(+) = coproporphyrinogen III + 4 CO2. It participates in porphyrin-containing compound metabolism; protoporphyrin-IX biosynthesis; coproporphyrinogen-III from 5-aminolevulinate: step 4/4. Its function is as follows. Catalyzes the decarboxylation of four acetate groups of uroporphyrinogen-III to yield coproporphyrinogen-III. This chain is Uroporphyrinogen decarboxylase, found in Xanthomonas euvesicatoria pv. vesicatoria (strain 85-10) (Xanthomonas campestris pv. vesicatoria).